Reading from the N-terminus, the 590-residue chain is DELLA protein GAI1 (590 aa).

Over residues 1–10 (MKREYHHPHH) the composition is skewed to basic residues. The interval 1–28 (MKREYHHPHHPTCSTSPTGKGKMWDADP) is disordered. Positions 35–39 (DELLA) match the DELLA motif motif. The tract at residues 153-182 (HIEQPPQQPPAPPLYQRDNKRLKPTTSATA) is disordered. Residues 205–575 (VDSQETGIRL…RPLIATSAWQ (371 aa)) form the GRAS domain. The segment at 212–266 (IRLVHTLMACAEAVQQENLKLAEALVKQIGFLAVSQAGAMRKVATYFAEGLARRI) is leucine repeat I (LRI). The interval 284-349 (QMHFYETCPY…GGPPSFRLTG (66 aa)) is VHIID. Residues 315–319 (VHVID) carry the VHIID motif. Residues 363-395 (EVGWKLAQLAETIHVEFEYRGFVANSLADLDAS) are leucine repeat II (LRII). The interval 405–496 (VAVNSVFELH…EVYLGQQICN (92 aa)) is PFYRE. An LXXLL motif motif is present at residues 413–417 (LHSLL). The SAW stretch occupies residues 499–575 (ACEGPERVER…RPLIATSAWQ (77 aa)).

The protein belongs to the GRAS family. DELLA subfamily. Phosphorylated. In terms of processing, ubiquitinated. Upon GA application it is ubiquitinated, leading to its subsequent degradation.

Its subcellular location is the nucleus. Functionally, probable transcriptional regulator that acts as a repressor of the gibberellin (GA) signaling pathway. Probably acts by participating in large multiprotein complexes that repress transcription of GA-inducible genes. Upon GA application, it is degraded by the proteasome, allowing the GA signaling pathway. This is DELLA protein GAI1 (GAI1) from Vitis vinifera (Grape).